The primary structure comprises 186 residues: NADH-quinone oxidoreductase subunit B (186 aa).

Residues C44, C45, C110, and C139 each contribute to the [4Fe-4S] cluster site.

Belongs to the complex I 20 kDa subunit family. In terms of assembly, NDH-1 is composed of 14 different subunits. Subunits NuoB, C, D, E, F, and G constitute the peripheral sector of the complex. [4Fe-4S] cluster is required as a cofactor.

The protein resides in the cell inner membrane. It carries out the reaction a quinone + NADH + 5 H(+)(in) = a quinol + NAD(+) + 4 H(+)(out). NDH-1 shuttles electrons from NADH, via FMN and iron-sulfur (Fe-S) centers, to quinones in the respiratory chain. The immediate electron acceptor for the enzyme in this species is believed to be ubiquinone. Couples the redox reaction to proton translocation (for every two electrons transferred, four hydrogen ions are translocated across the cytoplasmic membrane), and thus conserves the redox energy in a proton gradient. The sequence is that of NADH-quinone oxidoreductase subunit B from Leptospira biflexa serovar Patoc (strain Patoc 1 / Ames).